We begin with the raw amino-acid sequence, 201 residues long: Holliday junction branch migration complex subunit RuvA (201 aa).

The interval 1-64 is domain I; that stretch reads MYEYIRGQFQ…EDFIGLYGFT (64 aa). Residues 65-143 form a domain II region; that stretch reads TKEELEMFKL…PDELTSEEEQ (79 aa). The interval 144-152 is flexible linker; it reads LIEGINDNS. A domain III region spans residues 153–201; the sequence is DYSFNINETLSALMALGYTEKEAQKALEKVDKTLSIENMIKESLKLLMR.

Belongs to the RuvA family. Homotetramer. Forms an RuvA(8)-RuvB(12)-Holliday junction (HJ) complex. HJ DNA is sandwiched between 2 RuvA tetramers; dsDNA enters through RuvA and exits via RuvB. An RuvB hexamer assembles on each DNA strand where it exits the tetramer. Each RuvB hexamer is contacted by two RuvA subunits (via domain III) on 2 adjacent RuvB subunits; this complex drives branch migration. In the full resolvosome a probable DNA-RuvA(4)-RuvB(12)-RuvC(2) complex forms which resolves the HJ.

Its subcellular location is the cytoplasm. Functionally, the RuvA-RuvB-RuvC complex processes Holliday junction (HJ) DNA during genetic recombination and DNA repair, while the RuvA-RuvB complex plays an important role in the rescue of blocked DNA replication forks via replication fork reversal (RFR). RuvA specifically binds to HJ cruciform DNA, conferring on it an open structure. The RuvB hexamer acts as an ATP-dependent pump, pulling dsDNA into and through the RuvAB complex. HJ branch migration allows RuvC to scan DNA until it finds its consensus sequence, where it cleaves and resolves the cruciform DNA. This Clostridium perfringens (strain SM101 / Type A) protein is Holliday junction branch migration complex subunit RuvA.